A 106-amino-acid chain; its full sequence is Large ribosomal subunit protein uL24 (106 aa).

A compositionally biased stretch (basic and acidic residues) spans Glu-84–Arg-97. Positions Glu-84–Lys-106 are disordered.

This sequence belongs to the universal ribosomal protein uL24 family. In terms of assembly, part of the 50S ribosomal subunit.

Functionally, one of two assembly initiator proteins, it binds directly to the 5'-end of the 23S rRNA, where it nucleates assembly of the 50S subunit. Its function is as follows. One of the proteins that surrounds the polypeptide exit tunnel on the outside of the subunit. This chain is Large ribosomal subunit protein uL24, found in Anaeromyxobacter sp. (strain K).